The primary structure comprises 372 residues: Small ribosomal subunit protein mS77 (rPPR2) (372 aa).

The N-terminal 28 residues, 1–28 (MKSFLLSRQAIHRISLLSSKTPTFCRNF), are a transit peptide targeting the mitochondrion. Residues 240–265 (DNSIRESETVDGEVEEEGFVPSDEVE) form a disordered region. Positions 248–257 (TVDGEVEEEG) are enriched in acidic residues.

As to quaternary structure, component of the mitochondrial ribosome small subunit.

Its subcellular location is the mitochondrion. In terms of biological role, required for karyogamy during female gametophyte development, when the two polar nuclei fuse to form the diploid central cell nucleus. The polypeptide is Small ribosomal subunit protein mS77 (rPPR2) (Arabidopsis thaliana (Mouse-ear cress)).